The sequence spans 89 residues: Sodium channel toxin To13 (89 aa).

The N-terminal stretch at 1-18 (MKTLFLIITSFILLEVEG) is a signal peptide. In terms of domain architecture, LCN-type CS-alpha/beta spans 20 to 87 (KNGYPRDSKG…TWKNKEPKCK (68 aa)). 4 disulfide bridges follow: C30-C86, C34-C60, C45-C67, and C49-C69.

The protein belongs to the long (4 C-C) scorpion toxin superfamily. Sodium channel inhibitor family. As to expression, expressed by the venom gland.

Its subcellular location is the secreted. Inhibits voltage-gated sodium channels (Nav). This is Sodium channel toxin To13 from Tityus obscurus (Amazonian scorpion).